The sequence spans 508 residues: MKTAATFSALQDLDADLLIFPFSSEGLKKAASPVLEAAGLSDAPLDDFKAAAGDTLVLYPRPGKLRAPRVMLVGTGEAGSLDDWHRAATAAASRAVDLEARRIVFDLPAAGGKAKPGIEAVAETLVEGCLFGAYRFERLKSGKLDKGEKKTAAKGKAKKAEKGIDLLTLRVPASALAAAEKGMASGLVIGSAQEMARNLVNLPGNHLQAEDIARAAAASGKQYGYGVTVLRKKEIESLRMGGLVAVNQGSLNPPTFTVMDYVPKKKAKATIALVGKGVTFDSGGISIKPSEGMGDMKSDMAGAAAVIGAVEAAARLALPVRIIGLIPATDNMPDGNAQKPGDVITTYSGITVEVGNTDAEGRLILADALTYAAQKYSPDAIIDLATLTGACIVALGYQVAGLFSNDDALAGAIEGAARDTGEKVWRLPLWELYDEQIKSDVADVSNTGSRGAGTITAAKFLEKFIDGHKKWAHIDIAGPSFPAKGAAKVNGGSGFGVRLLVELLRKWS.

Mn(2+) is bound by residues lysine 276 and aspartate 281. Lysine 288 is a catalytic residue. Aspartate 299, aspartate 358, and glutamate 360 together coordinate Mn(2+). Arginine 362 is an active-site residue.

It belongs to the peptidase M17 family. Requires Mn(2+) as cofactor.

The protein localises to the cytoplasm. It catalyses the reaction Release of an N-terminal amino acid, Xaa-|-Yaa-, in which Xaa is preferably Leu, but may be other amino acids including Pro although not Arg or Lys, and Yaa may be Pro. Amino acid amides and methyl esters are also readily hydrolyzed, but rates on arylamides are exceedingly low.. The catalysed reaction is Release of an N-terminal amino acid, preferentially leucine, but not glutamic or aspartic acids.. Its function is as follows. Presumably involved in the processing and regular turnover of intracellular proteins. Catalyzes the removal of unsubstituted N-terminal amino acids from various peptides. In Chlorobium luteolum (strain DSM 273 / BCRC 81028 / 2530) (Pelodictyon luteolum), this protein is Probable cytosol aminopeptidase.